Consider the following 88-residue polypeptide: Small ribosomal subunit protein bS20 (88 aa).

Positions 1-26 are disordered; it reads MANTAQARKRARQNTKRRQNSASQRS. Positions 7–19 are enriched in basic residues; sequence ARKRARQNTKRRQ.

It belongs to the bacterial ribosomal protein bS20 family.

Functionally, binds directly to 16S ribosomal RNA. This chain is Small ribosomal subunit protein bS20, found in Psychrobacter cryohalolentis (strain ATCC BAA-1226 / DSM 17306 / VKM B-2378 / K5).